The following is a 522-amino-acid chain: Peptide chain release factor 3 (522 aa).

A tr-type G domain is found at alanine 10–serine 277. Residues serine 19–threonine 26, aspartate 87–histidine 91, and asparagine 141–aspartate 144 each bind GTP.

Belongs to the TRAFAC class translation factor GTPase superfamily. Classic translation factor GTPase family. PrfC subfamily.

Its subcellular location is the cytoplasm. Increases the formation of ribosomal termination complexes and stimulates activities of RF-1 and RF-2. It binds guanine nucleotides and has strong preference for UGA stop codons. It may interact directly with the ribosome. The stimulation of RF-1 and RF-2 is significantly reduced by GTP and GDP, but not by GMP. In Listeria innocua serovar 6a (strain ATCC BAA-680 / CLIP 11262), this protein is Peptide chain release factor 3.